Here is a 168-residue protein sequence, read N- to C-terminus: Photosystem I assembly protein Ycf3 (168 aa).

TPR repeat units lie at residues 35 to 68 (AFTYYRDGMSAQSEGNYAEALQNYYEAMRPEIDP), 72 to 105 (SYILYNIGLIHTSNGEHTKALEYYFRALERNPFL), and 120 to 153 (GEEAIRQGDSEIAEAWFDQAAEYWKQAIALTPGN).

This sequence belongs to the Ycf3 family.

The protein resides in the plastid. The protein localises to the chloroplast thylakoid membrane. Functionally, essential for the assembly of the photosystem I (PSI) complex. May act as a chaperone-like factor to guide the assembly of the PSI subunits. The sequence is that of Photosystem I assembly protein Ycf3 from Nuphar advena (Common spatterdock).